A 154-amino-acid polypeptide reads, in one-letter code: Snaclec EMS16 subunit beta (154 aa).

The N-terminal stretch at 1–26 (MGRLISVRFSLLVVFLSLSGIGAGLC) is a signal peptide. An intrachain disulfide couples cysteine 27 to cysteine 38. A C-type lectin domain is found at 34 to 147 (FDQHCYKVFE…CEKSVSFVCK (114 aa)). A glycan (N-linked (GlcNAc...) asparagine) is linked at asparagine 47. 2 disulfides stabilise this stretch: cysteine 55/cysteine 146 and cysteine 121/cysteine 138.

It belongs to the snaclec family. Heterodimer of subunits A and B; disulfide-linked. Expressed by the venom gland.

The protein resides in the secreted. Its function is as follows. EMS16 is a potent and selective inhibitor of alpha-2/beta-1 (ITGA2/ITGB1) integrin and acts as a potent antagonist of platelet aggregation and cell migration. Binds specifically to the I domain of the alpha-2 subunit, in a metal ion-independent fashion. The sequence is that of Snaclec EMS16 subunit beta from Echis multisquamatus (Central Asian sand viper).